The chain runs to 737 residues: DNA polymerase iota (737 aa).

One can recognise a UmuC domain in the interval 17 to 231; the sequence is IIHLDMDYFY…GDLKRVTGIG (215 aa). D21 is a binding site for Mg(2+). 2 residues coordinate a 2'-deoxyribonucleoside 5'-triphosphate: Y26 and R58. Residue D113 participates in Mg(2+) binding. Residue E114 is part of the active site. 2 DNA-binding regions span residues 212-277 and 288-413; these read TYAE…FGRD and KTIG…SKFQ. 4 disordered regions span residues 443–464, 482–515, 557–581, and 607–643; these read TSLT…RSSP, SPVP…SPKK, DSEK…RFRT, and LSSN…PSPT. Polar residues predominate over residues 491-502; it reads GSESAATNSDFS. 3 stretches are compositionally biased toward low complexity: residues 563 to 577, 607 to 618, and 632 to 643; these read PMST…APAP, LSSNASSTASSP, and PSTTTLPFPSPT. The short motif at 669-686 is the Ubiquitin-binding (UBM) element; it reads VDAEVFKELPVELQTELI.

Belongs to the DNA polymerase type-Y family. Requires Mg(2+) as cofactor. It depends on Mn(2+) as a cofactor.

It localises to the nucleus. The enzyme catalyses DNA(n) + a 2'-deoxyribonucleoside 5'-triphosphate = DNA(n+1) + diphosphate. Error-prone DNA polymerase specifically involved in DNA repair. Plays an important role in translesion synthesis, where the normal high-fidelity DNA polymerases cannot proceed and DNA synthesis stalls. Favors Hoogsteen base-pairing in the active site. Inserts the correct base with higher fidelity opposite an adenosine template. Exhibits low fidelity and efficiency opposite a thymidine template, where it will preferentially insert guanosine. Forms a Schiff base with 5'-deoxyribose phosphate at abasic sites, but may not have lyase activity. This is DNA polymerase iota from Drosophila melanogaster (Fruit fly).